A 107-amino-acid polypeptide reads, in one-letter code: Sperm-specific class P protein 34 (107 aa).

Residues 1-26 (MINVDPPTGNYPATGGNSTHNITSES) are disordered. In terms of domain architecture, MSP spans 1-107 (MINVDPPTGN…GEIIVKLIAA (107 aa)). The span at 15–25 (GGNSTHNITSE) shows a compositional bias: polar residues.

In terms of tissue distribution, expressed at higher level in testis.

This is Sperm-specific class P protein 34 (ssp-34) from Caenorhabditis elegans.